We begin with the raw amino-acid sequence, 464 residues long: ATP synthase subunit beta (464 aa).

Residue 153–160 participates in ATP binding; sequence GGAGVGKT.

It belongs to the ATPase alpha/beta chains family. In terms of assembly, F-type ATPases have 2 components, CF(1) - the catalytic core - and CF(0) - the membrane proton channel. CF(1) has five subunits: alpha(3), beta(3), gamma(1), delta(1), epsilon(1). CF(0) has three main subunits: a(1), b(2) and c(9-12). The alpha and beta chains form an alternating ring which encloses part of the gamma chain. CF(1) is attached to CF(0) by a central stalk formed by the gamma and epsilon chains, while a peripheral stalk is formed by the delta and b chains.

It is found in the cell membrane. The catalysed reaction is ATP + H2O + 4 H(+)(in) = ADP + phosphate + 5 H(+)(out). Produces ATP from ADP in the presence of a proton gradient across the membrane. The catalytic sites are hosted primarily by the beta subunits. The protein is ATP synthase subunit beta of Acetivibrio thermocellus (strain ATCC 27405 / DSM 1237 / JCM 9322 / NBRC 103400 / NCIMB 10682 / NRRL B-4536 / VPI 7372) (Clostridium thermocellum).